Reading from the N-terminus, the 120-residue chain is Testis-expressed protein 48 (120 aa).

Residues 29 to 45 (KVPSQTQEHKPSTQNLL) show a composition bias toward polar residues. Residues 29–86 (KVPSQTQEHKPSTQNLLLQKDELDRQNPKRINAVSHLPSRTPLIQTKKSTSSSSSEFE) form a disordered region. Over residues 74 to 83 (TKKSTSSSSS) the composition is skewed to low complexity.

The polypeptide is Testis-expressed protein 48 (Homo sapiens (Human)).